The sequence spans 1104 residues: Reverse gyrase (1104 aa).

Residues 1–39 (MAVNSKYHHSCINCGGLNTDERNERGLPCEVCLPEDSPS) form an RG N-terminal-type zinc finger. The Zn(2+) site is built by C11, C14, C29, and C32. 8 residues coordinate ADP: F75, D78, Q83, G103, G105, K106, T107, and T108. Residues Q83 and 100–107 (APTGVGKT) each bind ATP. Residues 87-242 (AKRIVQGKSF…FSTIKQGKIY (156 aa)) form the Helicase ATP-binding domain. The short motif at 203-206 (DDVD) is the DEAD box element. The tract at residues 223-250 (GIPEEIIRKAFSTIKQGKIYERPKNLKP) is insert region. Positions 300-522 (KLVELLEIFR…EAEANWKELV (223 aa)) constitute a Helicase C-terminal domain. The interval 390-460 (RFSLELDKAP…KDEDLELIIP (71 aa)) is latch region. The topoisomerase I stretch occupies residues 538 to 1104 (DTSRSLLIIV…EEIKSLMEEG (567 aa)). The 158-residue stretch at 542 to 699 (SLLIIVESPT…SLRRIEMHEI (158 aa)) folds into the Toprim domain. E548 lines the Mg(2+) pocket. The RG C-terminal-type zinc finger occupies 618–645 (LKRCRDCGYQFTEDRDECPVCSSKNIDD). Positions 621, 624, 635, and 638 each coordinate Zn(2+). Residue D668 coordinates Mg(2+). The Topo IA-type catalytic domain occupies 715–1101 (DFNLVKAQIV…LLYEEIKSLM (387 aa)). The active-site O-(5'-phospho-DNA)-tyrosine intermediate is the Y851.

In the N-terminal section; belongs to the DEAD box helicase family. DDVD subfamily. The protein in the C-terminal section; belongs to the type IA topoisomerase family. In terms of assembly, monomer. Zn(2+) serves as cofactor. It depends on Mg(2+) as a cofactor.

The protein localises to the cytoplasm. It catalyses the reaction ATP + H2O = ADP + phosphate + H(+). Modifies the topological state of DNA by introducing positive supercoils in an ATP-dependent process. Increases the linking number in steps of +1. Probably recognizes regions with a low GC content which melt and form a ssDNA bubble, allowing the enzyme to bind and cleave the DNA prior to strand passage; the bubble is probably cleaved by 2 reverse gyrase molecules, one on each strand. Positively supercoils DNA with all NTPS, although it strongly prefers ATP. In the presence of non-hydrolyzable ATP analogs it partially relaxes negative supercoils. Has an intrinsic ATPase activity that is stimulated by DNA; ssDNA is most effective. Binds to single-stranded DNA, transiently cleaves and then rejoins the ends, introducing a positive supercoil in the process. The scissile phosphodiester is attacked by the catalytic tyrosine of the enzyme, resulting in the formation of a DNA-(5'-phosphotyrosyl)-enzyme intermediate. The helicase-like domain is a nucleotide-dependent switch that alternates between a physically closed ATP-bound state with a slight preference for dsDNA, and an open ADP-bound state with a high preference for ssDNA. Whole enzyme has a very poor (k-unwind=0.001 sec(-1)) non-processive helicase activity in the 3'-5' direction that works on short substrates, while the isolated helicase domain has a slightly better helicase activity that works in both directions. Probably involved in rewinding DNA strands in regions of the chromosome that have opened up to allow replication, transcription, DNA repair and/or for DNA protection. The chain is Reverse gyrase from Thermotoga maritima (strain ATCC 43589 / DSM 3109 / JCM 10099 / NBRC 100826 / MSB8).